Reading from the N-terminus, the 247-residue chain is 5'-nucleotidase SurE (247 aa).

4 residues coordinate a divalent metal cation: Asp8, Asp9, Ser39, and Asn91.

This sequence belongs to the SurE nucleotidase family. The cofactor is a divalent metal cation.

Its subcellular location is the cytoplasm. It catalyses the reaction a ribonucleoside 5'-phosphate + H2O = a ribonucleoside + phosphate. In terms of biological role, nucleotidase that shows phosphatase activity on nucleoside 5'-monophosphates. In Nitrosomonas eutropha (strain DSM 101675 / C91 / Nm57), this protein is 5'-nucleotidase SurE.